The following is a 1713-amino-acid chain: uncharacterized protein (1713 aa).

Polar residues predominate over residues 1–12 (MNENEFSTNSLI). Disordered regions lie at residues 1–35 (MNEN…INFG), 79–200 (QQLN…KLSN), 226–290 (GNNN…QPLS), 309–557 (QYLS…PMSH), 713–734 (SNDQ…KKDR), 808–952 (SPPM…SITT), and 1143–1190 (HHHH…SISR). Composition is skewed to low complexity over residues 13-35 (NQQG…INFG), 79-109 (QQLN…NNNN), 126-170 (NNSG…NSGN), 177-200 (NMSD…KLSN), and 226-264 (GNNN…GGNN). Over residues 265 to 276 (SHHHHNHSHHNS) the composition is skewed to basic residues. Low complexity-rich tracts occupy residues 317 to 470 (NNIN…SPAS) and 478 to 489 (SNNFGGNHNNYN). A compositionally biased stretch (basic residues) spans 490-504 (HAHHSHHNNHAHHNT). A compositionally biased stretch (low complexity) spans 505–553 (HNYNNNNNNNNNNNNNNNNNNNNSNNSNNNSNTNNNGNNGNNSNNNNNH). Positions 544 to 825 (GNNSNNNNNH…QNPGRFLNHD (282 aa)) form a DNA-binding region, NDT80. The span at 822-832 (LNHDKSLKKDP) shows a compositional bias: basic and acidic residues. Residues 838–874 (GGKGGGGSGSGGMGGGMGGGMGNNGSSGSSSNGGYGN) are compositionally biased toward gly residues. Low complexity-rich tracts occupy residues 898–946 (SPTT…PTLT) and 1148–1189 (QQQQ…SSIS). The Peptidase S74 domain occupies 1240-1355 (SDQRIKSNIR…RSLKKEKDHI (116 aa)). A run of 3 helical transmembrane segments spans residues 1416-1436 (TMFV…FYLF), 1447-1467 (LMNF…TFYV), and 1473-1493 (LIIA…VGFF). Low complexity predominate over residues 1596-1605 (NSNNNINNNN). Disordered regions lie at residues 1596 to 1634 (NSNN…DFHE) and 1646 to 1665 (IKGK…SSSN). Residues 1617 to 1634 (FIDDFKKSSSNNHKDFHE) are compositionally biased toward basic and acidic residues.

The protein localises to the membrane. This is an uncharacterized protein from Dictyostelium discoideum (Social amoeba).